The sequence spans 739 residues: Phosphoribosylformylglycinamidine synthase subunit PurL (739 aa).

The active site involves histidine 53. Tyrosine 56 and lysine 95 together coordinate ATP. Glutamate 97 is a Mg(2+) binding site. Substrate contacts are provided by residues 98 to 101 and arginine 120; that span reads SHNH. Histidine 99 (proton acceptor) is an active-site residue. Aspartate 121 contacts Mg(2+). Glutamine 244 provides a ligand contact to substrate. Mg(2+) is bound at residue aspartate 274. 318 to 320 contributes to the substrate binding site; that stretch reads ESQ. Aspartate 501 and glycine 538 together coordinate ATP. Mg(2+) is bound at residue asparagine 539. Serine 541 provides a ligand contact to substrate.

It belongs to the FGAMS family. In terms of assembly, monomer. Part of the FGAM synthase complex composed of 1 PurL, 1 PurQ and 2 PurS subunits.

It localises to the cytoplasm. The catalysed reaction is N(2)-formyl-N(1)-(5-phospho-beta-D-ribosyl)glycinamide + L-glutamine + ATP + H2O = 2-formamido-N(1)-(5-O-phospho-beta-D-ribosyl)acetamidine + L-glutamate + ADP + phosphate + H(+). Its pathway is purine metabolism; IMP biosynthesis via de novo pathway; 5-amino-1-(5-phospho-D-ribosyl)imidazole from N(2)-formyl-N(1)-(5-phospho-D-ribosyl)glycinamide: step 1/2. Functionally, part of the phosphoribosylformylglycinamidine synthase complex involved in the purines biosynthetic pathway. Catalyzes the ATP-dependent conversion of formylglycinamide ribonucleotide (FGAR) and glutamine to yield formylglycinamidine ribonucleotide (FGAM) and glutamate. The FGAM synthase complex is composed of three subunits. PurQ produces an ammonia molecule by converting glutamine to glutamate. PurL transfers the ammonia molecule to FGAR to form FGAM in an ATP-dependent manner. PurS interacts with PurQ and PurL and is thought to assist in the transfer of the ammonia molecule from PurQ to PurL. This chain is Phosphoribosylformylglycinamidine synthase subunit PurL, found in Listeria monocytogenes serotype 4a (strain HCC23).